The chain runs to 154 residues: METIKALEKFMEFDRLQKDCSDKLDREKERRMKAEREIARKNCGGNPCERELESERSNVKRLEYQLDAEKEKVKFYKRELERDRYLSSRYLTSSSDPHEKPLPNYTFPRIKNVSPLTTEATGSVEVAPPSTDVTEPISDVTPSVDVEPEHPPAF.

Positions 17–85 (QKDCSDKLDR…YKRELERDRY (69 aa)) form a coiled coil. The interval 88–154 (SRYLTSSSDP…DVEPEHPPAF (67 aa)) is disordered.

This is 17 kDa A-type inclusion protein from Bos taurus (Bovine).